We begin with the raw amino-acid sequence, 185 residues long: NOP protein chaperone 1 (185 aa).

3 positions are modified to phosphoserine: S34, S66, and S177. Positions 121–185 (SRSDSKEEDS…DSPASKKKKQ (65 aa)) are disordered.

Interacts with NOP58, RUVBL1 and RUVBL2; the interactions are direct and NOPCHAP1 bridges the association of NOP58 with RUVBL1:RUVBL2 even in absence of snoRNAs. The interactions with RUVBL1 and RUVBL2 are disrupted upon ATP binding.

The protein resides in the nucleus. Its function is as follows. Client-loading PAQosome/R2TP complex cofactor that selects NOP58 to promote box C/D small nucleolar ribonucleoprotein (snoRNP) assembly. Acts as a bridge between NOP58 and the R2TP complex via RUVBL1:RUVBL2. The polypeptide is NOP protein chaperone 1 (Mus musculus (Mouse)).